The sequence spans 349 residues: Core protein VP7 (349 aa).

The N-linked (GlcNAc...) asparagine; by host glycan is linked to N287.

It belongs to the orbivirus VP7 family. In terms of assembly, homotrimer that assemble in a complex of 260 capsomers on an inner scaffold composed of VP3.

Its subcellular location is the virion. Functionally, the VP7 protein is one of the five proteins (with VP1, VP3, VP4, and VP6) which form the inner capsid of the virus. The polypeptide is Core protein VP7 (Segment-7) (Antilocapra americana (Pronghorn)).